The following is a 498-amino-acid chain: Oligopeptide transport system permease protein AmiC (498 aa).

Transmembrane regions (helical) follow at residues 12 to 32 (SLVSIFLVTTLTYTIIYTLVP), 279 to 299 (MIVSSAITGLIGLVLAYALAV), 316 to 336 (LSTGALTFLLALPTIALVYIV), 359 to 379 (SYVLPAVILGLLGAPGTAIWI), 415 to 435 (MVPLVSGIPAAIIGVIGGATL), and 461 to 481 (VVGLVFIFTCISIFSRLLGDI). In terms of domain architecture, ABC transmembrane type-1 spans 280-479 (IVSSAITGLI…CISIFSRLLG (200 aa)).

It belongs to the binding-protein-dependent transport system permease family. OppBC subfamily.

The protein resides in the cell membrane. Part of the binding-protein-dependent transport system for oligopeptides; probably responsible for the translocation of the substrate across the membrane. The chain is Oligopeptide transport system permease protein AmiC (amiC) from Streptococcus pneumoniae serotype 4 (strain ATCC BAA-334 / TIGR4).